The sequence spans 280 residues: Shikimate dehydrogenase (NADP(+)) (280 aa).

Shikimate-binding positions include 15–17 (SLS) and Thr62. Residue Lys66 is the Proton acceptor of the active site. Positions 88 and 104 each coordinate shikimate. NADP(+)-binding positions include 128 to 132 (GAGGA), 151 to 156 (NRTEER), and Ile222. Tyr224 contacts shikimate. Gly245 contacts NADP(+).

It belongs to the shikimate dehydrogenase family. Homodimer.

The catalysed reaction is shikimate + NADP(+) = 3-dehydroshikimate + NADPH + H(+). The protein operates within metabolic intermediate biosynthesis; chorismate biosynthesis; chorismate from D-erythrose 4-phosphate and phosphoenolpyruvate: step 4/7. In terms of biological role, involved in the biosynthesis of the chorismate, which leads to the biosynthesis of aromatic amino acids. Catalyzes the reversible NADPH linked reduction of 3-dehydroshikimate (DHSA) to yield shikimate (SA). In Methanosarcina acetivorans (strain ATCC 35395 / DSM 2834 / JCM 12185 / C2A), this protein is Shikimate dehydrogenase (NADP(+)).